The following is a 293-amino-acid chain: Glycine--tRNA ligase alpha subunit (293 aa).

It belongs to the class-II aminoacyl-tRNA synthetase family. Tetramer of two alpha and two beta subunits.

The protein resides in the cytoplasm. The catalysed reaction is tRNA(Gly) + glycine + ATP = glycyl-tRNA(Gly) + AMP + diphosphate. The sequence is that of Glycine--tRNA ligase alpha subunit from Oceanobacillus iheyensis (strain DSM 14371 / CIP 107618 / JCM 11309 / KCTC 3954 / HTE831).